Reading from the N-terminus, the 209-residue chain is CMRF35-like molecule 7 (209 aa).

An N-terminal signal peptide occupies residues 1 to 17 (MWLSPALLLLSFPGCLS). Residues 18–120 (IQGPALVRGP…TDRGTRVKVN (103 aa)) form the Ig-like V-type domain. The Extracellular segment spans residues 18–157 (IQGPALVRGP…SSDLQKRTYY (140 aa)). Residues C36 and C104 are joined by a disulfide bond. N-linked (GlcNAc...) asparagine glycosylation is present at N97. The helical transmembrane segment at 158–178 (MLLVFVKVPALLILVGAVLWL) threads the bilayer. At 179–209 (KRSTQKVPEEQWRHTLCSDLDSELLAKDISP) the chain is on the cytoplasmic side. Phosphoserine is present on S196.

The protein belongs to the CD300 family. In terms of assembly, interacts with TYROBP, which enhances cell surface expression and activation properties. May interact with HCST. In terms of processing, N-glycosylated. Expressed in myeloid cells (at protein level).

It localises to the cell membrane. Functionally, acts as an activating immune receptor in mast cells through its interaction with ITAM-bearing adapter TYROBP. In Mus musculus (Mouse), this protein is CMRF35-like molecule 7 (Cd300lb).